We begin with the raw amino-acid sequence, 533 residues long: Decreased expression in renal and prostate cancer protein (533 aa).

Residues 1–12 (MKEPRIFPRERP) are compositionally biased toward basic and acidic residues. Disordered regions lie at residues 1 to 31 (MKEP…GGPV), 67 to 164 (QNPS…PDPR), 177 to 259 (MRAG…RAGG), and 299 to 350 (ASGN…PNSA). Serine 160 carries the phosphoserine modification. A compositionally biased stretch (polar residues) spans 299 to 309 (ASGNMGTNPPT). At arginine 368 the chain carries Asymmetric dimethylarginine. Arginine 396 bears the Omega-N-methylarginine mark. Serine 432 carries the phosphoserine modification.

The protein belongs to the DERPC family.

The protein resides in the nucleus. Its function is as follows. Potential tumor suppressor. In Mus musculus (Mouse), this protein is Decreased expression in renal and prostate cancer protein.